A 263-amino-acid polypeptide reads, in one-letter code: MGSGNLIKAIIRLKKSKQGTEKKKTSAVKPKKGSKKKGTSLVTRSEDWAATRIQTAFKAYKARKSLRRLKGIARAKLSTEKQSVKNQAVVTLRYLHSWSKIQSEIKARRVCMVTEWRLKNKRLEHQQKLEAKLHDVEVEWNGGSETKDEILERILQREEATIKRERALAYAFSHQWKADGKTQWLGSYELGNTNWGWSWKERWISARPWEVRYSVTPKKPKSSKTDSNSPAKRTVSLSSVPAKTPFPGARNTVKPRRLSFPGA.

Positions 16 to 41 (SKQGTEKKKTSAVKPKKGSKKKGTSL) are disordered. Residues 21-28 (EKKKTSAV) carry the Nuclear localization signal 1 motif. Over residues 25 to 38 (TSAVKPKKGSKKKG) the composition is skewed to basic residues. One can recognise an IQ domain in the interval 46–75 (EDWAATRIQTAFKAYKARKSLRRLKGIARA). Residues 59–78 (AYKARKSLRRLKGIARAKLS) form a calmodulin-binding region. The short motif at 107 to 114 (ARRVCMVT) is the Nuclear localization signal 2 element. A disordered region spans residues 216 to 263 (TPKKPKSSKTDSNSPAKRTVSLSSVPAKTPFPGARNTVKPRRLSFPGA). The segment covering 226–241 (DSNSPAKRTVSLSSVP) has biased composition (polar residues).

This sequence belongs to the IQD family. Binds to multiple calmodulin (CaM) in the presence of Ca(2+) and CaM-like proteins.

It is found in the nucleus. The protein resides in the nuclear body. May be involved in cooperative interactions with calmodulins or calmodulin-like proteins. Recruits calmodulin proteins to microtubules, thus being a potential scaffold in cellular signaling and trafficking. May associate with nucleic acids and regulate gene expression at the transcriptional or post-transcriptional level. The polypeptide is Protein IQ-DOMAIN 9 (Arabidopsis thaliana (Mouse-ear cress)).